Consider the following 321-residue polypeptide: Methionine import ATP-binding protein MetN (321 aa).

The ABC transporter domain maps to 2 to 237 (ISIKNVNKYY…NTKGLRKLIG (236 aa)). 34–41 (GHSGAGKS) serves as a coordination point for ATP.

Belongs to the ABC transporter superfamily. Methionine importer (TC 3.A.1.24) family. As to quaternary structure, the complex is composed of two ATP-binding proteins (MetN), two transmembrane proteins (MetI) and a solute-binding protein (MetQ).

The protein resides in the cell membrane. It catalyses the reaction L-methionine(out) + ATP + H2O = L-methionine(in) + ADP + phosphate + H(+). It carries out the reaction D-methionine(out) + ATP + H2O = D-methionine(in) + ADP + phosphate + H(+). Its function is as follows. Part of the ABC transporter complex MetNIQ involved in methionine import. Responsible for energy coupling to the transport system. This Clostridioides difficile (strain 630) (Peptoclostridium difficile) protein is Methionine import ATP-binding protein MetN.